Reading from the N-terminus, the 195-residue chain is Thymidine kinase (195 aa).

ATP-binding positions include 15–22 (GSMFSGKT) and 91–94 (DEAN). The active-site Proton acceptor is E92. The Zn(2+) site is built by C148, C151, C186, and C189.

It belongs to the thymidine kinase family. In terms of assembly, homotetramer.

The protein resides in the cytoplasm. The enzyme catalyses thymidine + ATP = dTMP + ADP + H(+). This chain is Thymidine kinase, found in Halobacterium salinarum (strain ATCC 29341 / DSM 671 / R1).